The following is a 133-amino-acid chain: Putative pre-16S rRNA nuclease (133 aa).

This sequence belongs to the YqgF nuclease family.

The protein localises to the cytoplasm. Its function is as follows. Could be a nuclease involved in processing of the 5'-end of pre-16S rRNA. The chain is Putative pre-16S rRNA nuclease from Alcanivorax borkumensis (strain ATCC 700651 / DSM 11573 / NCIMB 13689 / SK2).